Reading from the N-terminus, the 102-residue chain is Secreted RxLR effector protein 61 (102 aa).

Residues 1–22 (MAFQLRIVQHLLHITFLRLPLA) form the signal peptide. The RxLR-dEER motif lies at 51–60 (RRLRQLNEHR).

This sequence belongs to the RxLR effector family.

It is found in the secreted. The protein resides in the host chloroplast envelope. Its subcellular location is the host cytoplasm. It localises to the host nucleus. In terms of biological role, effector that partially suppresses the tobacco programmed cell death induced by cell death-inducing proteins. In Plasmopara viticola (Downy mildew of grapevine), this protein is Secreted RxLR effector protein 61.